A 268-amino-acid polypeptide reads, in one-letter code: tRNA pseudouridine synthase A (268 aa).

Residue D54 is the Nucleophile of the active site. Y112 provides a ligand contact to substrate.

It belongs to the tRNA pseudouridine synthase TruA family. Homodimer.

The enzyme catalyses uridine(38/39/40) in tRNA = pseudouridine(38/39/40) in tRNA. Functionally, formation of pseudouridine at positions 38, 39 and 40 in the anticodon stem and loop of transfer RNAs. This Bordetella petrii (strain ATCC BAA-461 / DSM 12804 / CCUG 43448) protein is tRNA pseudouridine synthase A.